A 156-amino-acid polypeptide reads, in one-letter code: DNA gyrase inhibitor (156 aa).

This sequence belongs to the DNA gyrase inhibitor family. Interacts with DNA gyrase.

The protein resides in the cytoplasm. Inhibits the supercoiling activity of DNA gyrase. Acts by inhibiting DNA gyrase at an early step, prior to (or at the step of) binding of DNA by the gyrase. It protects cells against toxins that target DNA gyrase, by inhibiting activity of these toxins and reducing the formation of lethal double-strand breaks in the cell. This is DNA gyrase inhibitor from Serratia proteamaculans (strain 568).